The chain runs to 226 residues: Lipoprotein-releasing system ATP-binding protein LolD (226 aa).

Positions 5-226 (LKATNINKIY…LLRNGHWENY (222 aa)) constitute an ABC transporter domain. 41 to 48 (GTSGSGKS) is a binding site for ATP.

The protein belongs to the ABC transporter superfamily. Lipoprotein translocase (TC 3.A.1.125) family. As to quaternary structure, the complex is composed of two ATP-binding proteins (LolD) and two transmembrane proteins (LolC and LolE).

It localises to the cell inner membrane. Its function is as follows. Part of the ABC transporter complex LolCDE involved in the translocation of mature outer membrane-directed lipoproteins, from the inner membrane to the periplasmic chaperone, LolA. Responsible for the formation of the LolA-lipoprotein complex in an ATP-dependent manner. This Psychrobacter arcticus (strain DSM 17307 / VKM B-2377 / 273-4) protein is Lipoprotein-releasing system ATP-binding protein LolD.